We begin with the raw amino-acid sequence, 1161 residues long: BMP-2-inducible protein kinase (1161 aa).

Residues 1 to 20 (MKKFSRMPKSEGGSGGGAAG) form a disordered region. Serine 14 carries the phosphoserine modification. The 266-residue stretch at 51–316 (VTLEESLAEG…DIFQVSYFAF (266 aa)) folds into the Protein kinase domain. ATP-binding positions include 57 to 65 (LAEGGFSTV) and lysine 79. Residue aspartate 180 is the Proton acceptor of the active site. 4 disordered regions span residues 358–439 (TDTI…RVLQ), 453–495 (LQHR…HHHL), 610–630 (TNQK…FGED), and 655–832 (ERAS…TQDL). Residues 361-394 (IGPTETSIAPRQRPKANSATTATPSVLTIQSSAT) are compositionally biased toward polar residues. Low complexity-rich tracts occupy residues 422 to 439 (LLGQ…RVLQ) and 460 to 485 (QQQQ…QQQQ). Residues 610–619 (TNQKNISNPP) are compositionally biased toward polar residues. Serine 689 carries the post-translational modification Phosphoserine. Composition is skewed to polar residues over residues 697-718 (SSIN…SPAS) and 726-735 (KTSVQGQVQK). Serine 742 carries the post-translational modification Phosphoserine. The span at 755-779 (EEEEQDDEEVLQGEQGDFNDDDTEP) shows a compositional bias: acidic residues. Residues 798-813 (EKHSSDSDYEQAKAKY) are compositionally biased toward basic and acidic residues. 2 positions are modified to phosphoserine: serine 817 and serine 818. Phosphothreonine is present on threonine 834. Phosphoserine is present on serine 928. Residues 965 to 1035 (SQQQKVKQRS…RRDSQSSNEF (71 aa)) are disordered. Over residues 970-984 (VKQRSLQKLSSRQRR) the composition is skewed to basic residues. Low complexity predominate over residues 1000-1011 (TPTSTKKTLKPT). Residues serine 1029, serine 1031, serine 1032, serine 1039, serine 1041, serine 1076, serine 1107, and serine 1111 each carry the phosphoserine modification. The segment covering 1137-1146 (TPHQSQQSQP) has biased composition (polar residues). The disordered stretch occupies residues 1137-1161 (TPHQSQQSQPVELDPFGAAPFPSKQ).

The protein belongs to the protein kinase superfamily. Ser/Thr protein kinase family. Autophosphorylated.

The protein localises to the nucleus. The catalysed reaction is L-seryl-[protein] + ATP = O-phospho-L-seryl-[protein] + ADP + H(+). The enzyme catalyses L-threonyl-[protein] + ATP = O-phospho-L-threonyl-[protein] + ADP + H(+). May be involved in osteoblast differentiation. The polypeptide is BMP-2-inducible protein kinase (BMP2K) (Homo sapiens (Human)).